A 397-amino-acid polypeptide reads, in one-letter code: Xyloglucan O-acetyltransferase 3 (397 aa).

Over 1 to 3 the chain is Cytoplasmic; that stretch reads MNR. A helical; Signal-anchor for type II membrane protein membrane pass occupies residues 4–24; it reads FFYTVGLIFLFSFFILYSPKT. Residues 25–397 lie on the Lumenal side of the membrane; the sequence is SDLSNNVDLH…RHAFTDFTWS (373 aa). 4 disulfide bridges follow: Cys48-Cys98, Cys69-Cys134, Cys78-Cys370, and Cys293-Cys366. Asn66 carries N-linked (GlcNAc...) asparagine glycosylation. Residues 121–123 carry the GDS motif motif; the sequence is GDS. The Nucleophile role is filled by Ser123. N-linked (GlcNAc...) asparagine glycosylation is found at Asn162, Asn182, and Asn294. Asp365 serves as the catalytic Proton donor. The short motif at 365-368 is the DXXH motif element; sequence DCVH. The Proton acceptor role is filled by His368.

It belongs to the PC-esterase family. TBL subfamily.

The protein localises to the golgi apparatus membrane. Xyloglucan acetyltransferase that catalyzes the acetylation of fucosylated Gal residues on xyloglucan side chains. Predominantly catalyze 6-O-monoacetylation of Gal residues in the Fuc-Gal-Xyl trisaccharide side chains of xyloglucan oligomers. The chain is Xyloglucan O-acetyltransferase 3 from Populus trichocarpa (Western balsam poplar).